Consider the following 172-residue polypeptide: Peptidyl-prolyl cis-trans isomerase (172 aa).

The region spanning 7 to 170 (FFDMSVGGQP…KKVVVEDCGQ (164 aa)) is the PPIase cyclophilin-type domain.

The protein belongs to the cyclophilin-type PPIase family. Post-translationally, not glycosylated. In terms of tissue distribution, expressed in pollen.

It localises to the cytoplasm. It carries out the reaction [protein]-peptidylproline (omega=180) = [protein]-peptidylproline (omega=0). Its activity is regulated as follows. Binds cyclosporin A (CsA). CsA mediates some of its effects via an inhibitory action on PPIase. Its function is as follows. PPIases accelerate the folding of proteins. It catalyzes the cis-trans isomerization of proline imidic peptide bonds in oligopeptides. In Catharanthus roseus (Madagascar periwinkle), this protein is Peptidyl-prolyl cis-trans isomerase (PCKR1).